The following is a 417-amino-acid chain: Serine hydroxymethyltransferase (417 aa).

Residues Leu121 and 125-127 (GHL) each bind (6S)-5,6,7,8-tetrahydrofolate. Lys229 carries the post-translational modification N6-(pyridoxal phosphate)lysine. 355–357 (SPF) is a binding site for (6S)-5,6,7,8-tetrahydrofolate.

Belongs to the SHMT family. In terms of assembly, homodimer. The cofactor is pyridoxal 5'-phosphate.

It is found in the cytoplasm. It carries out the reaction (6R)-5,10-methylene-5,6,7,8-tetrahydrofolate + glycine + H2O = (6S)-5,6,7,8-tetrahydrofolate + L-serine. Its pathway is one-carbon metabolism; tetrahydrofolate interconversion. It participates in amino-acid biosynthesis; glycine biosynthesis; glycine from L-serine: step 1/1. Catalyzes the reversible interconversion of serine and glycine with tetrahydrofolate (THF) serving as the one-carbon carrier. This reaction serves as the major source of one-carbon groups required for the biosynthesis of purines, thymidylate, methionine, and other important biomolecules. Also exhibits THF-independent aldolase activity toward beta-hydroxyamino acids, producing glycine and aldehydes, via a retro-aldol mechanism. The polypeptide is Serine hydroxymethyltransferase (Xanthomonas campestris pv. campestris (strain 8004)).